A 491-amino-acid polypeptide reads, in one-letter code: Glutamate--tRNA ligase (491 aa).

Residues 13–23 (PSPTGFLHIGN) carry the 'HIGH' region motif. Zn(2+) is bound by residues Cys110, Cys112, Cys137, and His139. Positions 254–258 (KLSKR) match the 'KMSKS' region motif. ATP is bound at residue Lys257.

This sequence belongs to the class-I aminoacyl-tRNA synthetase family. Glutamate--tRNA ligase type 1 subfamily. As to quaternary structure, monomer. Zn(2+) is required as a cofactor.

It localises to the cytoplasm. It catalyses the reaction tRNA(Glu) + L-glutamate + ATP = L-glutamyl-tRNA(Glu) + AMP + diphosphate. Catalyzes the attachment of glutamate to tRNA(Glu) in a two-step reaction: glutamate is first activated by ATP to form Glu-AMP and then transferred to the acceptor end of tRNA(Glu). This is Glutamate--tRNA ligase from Listeria welshimeri serovar 6b (strain ATCC 35897 / DSM 20650 / CCUG 15529 / CIP 8149 / NCTC 11857 / SLCC 5334 / V8).